Here is a 724-residue protein sequence, read N- to C-terminus: uncharacterized protein (724 aa).

Disordered stretches follow at residues 1-23 (MEDR…IPDN), 166-477 (PDGY…PPRD), 496-517 (EAHD…AHGP), and 532-691 (DHPI…PALS). 2 stretches are compositionally biased toward polar residues: residues 227–245 (VSQS…TVNQ) and 270–296 (STTL…TSDA). The span at 304–322 (TRDHDRYGNGRGPDTDRLE) shows a compositional bias: basic and acidic residues. Over residues 403-413 (PSSSHSETPNM) the composition is skewed to polar residues. 2 stretches are compositionally biased toward basic and acidic residues: residues 550–560 (RNHEFTEDKRL) and 637–657 (LRHD…DLAA). A compositionally biased stretch (low complexity) spans 682–691 (RLAAASPALS).

This is an uncharacterized protein from Neurospora crassa (strain ATCC 24698 / 74-OR23-1A / CBS 708.71 / DSM 1257 / FGSC 987).